Here is a 426-residue protein sequence, read N- to C-terminus: Enolase (426 aa).

Q163 is a binding site for (2R)-2-phosphoglycerate. The active-site Proton donor is E205. Positions 242, 283, and 310 each coordinate Mg(2+). (2R)-2-phosphoglycerate is bound by residues K335, R364, S365, and K386. The active-site Proton acceptor is K335.

Belongs to the enolase family. Mg(2+) is required as a cofactor.

The protein localises to the cytoplasm. It localises to the secreted. Its subcellular location is the cell surface. The enzyme catalyses (2R)-2-phosphoglycerate = phosphoenolpyruvate + H2O. It participates in carbohydrate degradation; glycolysis; pyruvate from D-glyceraldehyde 3-phosphate: step 4/5. Catalyzes the reversible conversion of 2-phosphoglycerate (2-PG) into phosphoenolpyruvate (PEP). It is essential for the degradation of carbohydrates via glycolysis. The chain is Enolase from Arthrobacter sp. (strain FB24).